The primary structure comprises 699 residues: Catalase-peroxidase (699 aa).

Residues 72–200 constitute a cross-link (tryptophyl-tyrosyl-methioninium (Trp-Tyr) (with M-226)); it reads WHSAGTYRIA…LAAVMMGLIY (129 aa). The active-site Proton acceptor is His73. The tryptophyl-tyrosyl-methioninium (Tyr-Met) (with W-72) cross-link spans 200–226; the sequence is YVNPEGVDGNPDPLKTAKDMRVTFARM. His241 provides a ligand contact to heme b.

Belongs to the peroxidase family. Peroxidase/catalase subfamily. As to quaternary structure, homodimer or homotetramer. It depends on heme b as a cofactor. In terms of processing, formation of the three residue Trp-Tyr-Met cross-link is important for the catalase, but not the peroxidase activity of the enzyme.

It catalyses the reaction H2O2 + AH2 = A + 2 H2O. It carries out the reaction 2 H2O2 = O2 + 2 H2O. Its function is as follows. Bifunctional enzyme with both catalase and broad-spectrum peroxidase activity. The protein is Catalase-peroxidase of Aeromonas salmonicida (strain A449).